Consider the following 201-residue polypeptide: Small ribosomal subunit protein uS4 (201 aa).

An S4 RNA-binding domain is found at 92–155 (RRLDAVVYAL…QKLDIIQESV (64 aa)).

It belongs to the universal ribosomal protein uS4 family. As to quaternary structure, part of the 30S ribosomal subunit. Contacts protein S5. The interaction surface between S4 and S5 is involved in control of translational fidelity.

In terms of biological role, one of the primary rRNA binding proteins, it binds directly to 16S rRNA where it nucleates assembly of the body of the 30S subunit. With S5 and S12 plays an important role in translational accuracy. This is Small ribosomal subunit protein uS4 from Staphylococcus carnosus (strain TM300).